Reading from the N-terminus, the 267-residue chain is MRLIIKNDSCEAGEYISQVIKKRINDYFLNRKSGDNRPFVIGLPTGSSPLPIYKRLIEMNKNKEISFQEVVTFNMDEYVGLESNHKFSYHYFMWENFFNHIDIKKENINILNGTTDNHENECKLYEEKIQSYGGIDLFLGGMGVDGHIAFNEPGSSLSSRTRIKTLTRDTIIANSRFFNNINQVPTQALTVGVGTIMDAREIILIVTGHSKAIALYRTIEEGVNHMWTASAIQMHKKSIIVCDEDATAELKVKTYKYFKQVESNSNY.

Residue D76 is the Proton acceptor; for enolization step of the active site. Residue D145 is the For ring-opening step of the active site. H147 functions as the Proton acceptor; for ring-opening step in the catalytic mechanism. The active-site For ring-opening step is E152.

The protein belongs to the glucosamine/galactosamine-6-phosphate isomerase family. As to quaternary structure, homohexamer.

It localises to the cytoplasm. It catalyses the reaction alpha-D-glucosamine 6-phosphate + H2O = beta-D-fructose 6-phosphate + NH4(+). It functions in the pathway nucleotide-sugar biosynthesis; UDP-N-acetyl-alpha-D-glucosamine biosynthesis; alpha-D-glucosamine 6-phosphate from D-fructose 6-phosphate: step 1/1. Its function is as follows. Catalyzes the reversible conversion of alpha-D-glucosamine 6-phosphate (GlcN-6P) into beta-D-fructose 6-phosphate (Fru-6P) and ammonium ion, a regulatory reaction step in de novo uridine diphosphate-N-acetyl-alpha-D-glucosamine (UDP-GlcNAc) biosynthesis via hexosamine pathway. The protein is Glucosamine-6-phosphate deaminase of Dictyostelium discoideum (Social amoeba).